The primary structure comprises 211 residues: Probable oligoribonuclease (211 aa).

Positions 38–202 (IVWMDLEMTG…DDIRESIKEL (165 aa)) constitute an Exonuclease domain. The active site involves Tyr-159.

This sequence belongs to the oligoribonuclease family.

Functionally, 3'-to-5' exoribonuclease specific for small oligoribonucleotides. The sequence is that of Probable oligoribonuclease from Drosophila melanogaster (Fruit fly).